The chain runs to 434 residues: Cytochrome P450 144 (434 aa).

The substrate site is built by Asp124 and His128. The heme site is built by Arg132, Arg326, His383, and Cys385.

This sequence belongs to the cytochrome P450 family. In terms of assembly, monomer. Heme is required as a cofactor.

The chain is Cytochrome P450 144 (cyp144) from Mycobacterium tuberculosis (strain CDC 1551 / Oshkosh).